The chain runs to 360 residues: Complement control protein homolog (360 aa).

A signal peptide spans 1–20 (MYTLHYICLVLSCVIYFVWT). 4 Sushi domains span residues 21–81 (LSCP…KCQK), 82–144 (KKCS…ICDI), 145–207 (KKCK…KCEF), and 208–266 (IFCK…ECMK). Cystine bridges form between C23–C68, C54–C79, C84–C125, C111–C142, C147–C191, C175–C205, C210–C252, and C238–C264. Residues N36, N39, N46, and N72 are each glycosylated (N-linked (GlcNAc...) asparagine; by host). The N-linked (GlcNAc...) asparagine; by host glycan is linked to N155. N294 carries N-linked (GlcNAc...) asparagine; by host glycosylation. The chain crosses the membrane as a helical span at residues 328 to 350 (GVLVIILTTSFIIIGIILTGVCL).

It belongs to the receptors of complement activation (RCA) family.

The protein resides in the membrane. It is found in the secreted. In Saimiriine herpesvirus 2 (strain 11) (SaHV-2), this protein is Complement control protein homolog (4).